Consider the following 350-residue polypeptide: Core protein VP7 (350 aa).

Asn-45 carries an N-linked (GlcNAc...) asparagine; by host glycan.

It belongs to the orbivirus VP7 family. As to quaternary structure, homotrimer.

Its subcellular location is the virion. Major structural core protein; binds to structural protein VP3. Constitutes the surface of the AHSV core. This African horse sickness virus (AHSV) protein is Core protein VP7 (Segment-7).